Here is a 475-residue protein sequence, read N- to C-terminus: V-type ATP synthase beta chain (475 aa).

This sequence belongs to the ATPase alpha/beta chains family.

Its function is as follows. Produces ATP from ADP in the presence of a proton gradient across the membrane. The V-type beta chain is a regulatory subunit. The chain is V-type ATP synthase beta chain from Anaeromyxobacter dehalogenans (strain 2CP-C).